A 584-amino-acid chain; its full sequence is Endogenous retrovirus group FC1 Env polyprotein (584 aa).

An N-terminal signal peptide occupies residues 1 to 22; it reads MARPSPLCLLLLLTLLPPIVPS. Residues 23–514 are Extracellular-facing; it reads NSLLTEPPFR…NYGGGWWQSP (492 aa). Asparagine 69 and asparagine 247 each carry an N-linked (GlcNAc...) asparagine glycan. The short motif at 251–254 is the CXXC element; sequence CFLC. Residues asparagine 272, asparagine 276, asparagine 308, asparagine 313, asparagine 322, asparagine 334, asparagine 342, and asparagine 346 are each glycosylated (N-linked (GlcNAc...) asparagine). Residues 388–413 form a fusion peptide region; that stretch reads PLVIGVSLTSSLVASGLGTGAIVHFI. Positions 449 to 465 match the CKS-17 motif; that stretch reads MQNRRALDLLTADKGGT. Residues cysteine 466 and cysteine 473 are joined by a disulfide bond. The CX6CC motif lies at 466-474; sequence CMFLGEECC. Residue asparagine 478 is glycosylated (N-linked (GlcNAc...) asparagine). The helical transmembrane segment at 515-540 threads the bilayer; it reads LTTWIIPFISPILIICLLLLIAPCVL. The Cytoplasmic portion of the chain corresponds to 541–584; it reads KFIKNRISEVSRVTVNQMLLHPYSRLPTSEDHYDVALTQQEAAR.

It belongs to the gamma type-C retroviral envelope protein family. HERV class-I F(c)1 env subfamily. The surface (SU) and transmembrane (TM) proteins form a heterodimer. SU and TM are attached by noncovalent interactions or by a labile interchain disulfide bond. Post-translationally, specific enzymatic cleavages in vivo yield the mature SU and TM proteins. In terms of processing, the CXXC motif is highly conserved across a broad range of retroviral envelope proteins. It is thought to participate in the formation of a labile disulfide bond possibly with the CX6CC motif present in the transmembrane protein.

Its subcellular location is the virion. The protein resides in the cell membrane. In terms of biological role, retroviral envelope proteins mediate receptor recognition and membrane fusion during early infection. Endogenous envelope proteins may have kept, lost or modified their original function during evolution. This endogenous envelope protein has lost its original fusogenic properties. SU mediates receptor recognition. Functionally, TM anchors the envelope heterodimer to the viral membrane through one transmembrane domain. The other hydrophobic domain, called fusion peptide, mediates fusion of the viral membrane with the target cell membrane. This Pan troglodytes (Chimpanzee) protein is Endogenous retrovirus group FC1 Env polyprotein (ERVFC1).